The sequence spans 301 residues: Glycine--tRNA ligase alpha subunit (301 aa).

It belongs to the class-II aminoacyl-tRNA synthetase family. In terms of assembly, tetramer of two alpha and two beta subunits.

It localises to the cytoplasm. It carries out the reaction tRNA(Gly) + glycine + ATP = glycyl-tRNA(Gly) + AMP + diphosphate. This chain is Glycine--tRNA ligase alpha subunit, found in Actinobacillus pleuropneumoniae serotype 5b (strain L20).